Reading from the N-terminus, the 591-residue chain is Probable indole-3-acetic acid-amido synthetase GH3.11 (591 aa).

The protein belongs to the IAA-amido conjugating enzyme family. Expressed in etiolated and green seedlings, roots, callus and highly in flowers.

Functionally, may catalyze the synthesis of indole-3-acetic acid (IAA)-amino acid conjugates, providing a mechanism for the plant to cope with the presence of excess auxin. This chain is Probable indole-3-acetic acid-amido synthetase GH3.11 (GH3.11), found in Oryza sativa subsp. japonica (Rice).